The primary structure comprises 240 residues: Dihydromonapterin reductase (240 aa).

Tyrosine 152 serves as the catalytic Proton acceptor.

This sequence belongs to the short-chain dehydrogenases/reductases (SDR) family. FolM subfamily.

It catalyses the reaction (6S)-5,6,7,8-tetrahydrofolate + NADP(+) = 7,8-dihydrofolate + NADPH + H(+). The enzyme catalyses 7,8-dihydromonapterin + NADPH + H(+) = 5,6,7,8-tetrahydromonapterin + NADP(+). Catalyzes the reduction of dihydromonapterin to tetrahydromonapterin. Also has lower activity with dihydrofolate. In Escherichia coli (strain SMS-3-5 / SECEC), this protein is Dihydromonapterin reductase (folM).